A 568-amino-acid chain; its full sequence is Proline--tRNA ligase (568 aa).

It belongs to the class-II aminoacyl-tRNA synthetase family. ProS type 1 subfamily. Homodimer.

It is found in the cytoplasm. The enzyme catalyses tRNA(Pro) + L-proline + ATP = L-prolyl-tRNA(Pro) + AMP + diphosphate. In terms of biological role, catalyzes the attachment of proline to tRNA(Pro) in a two-step reaction: proline is first activated by ATP to form Pro-AMP and then transferred to the acceptor end of tRNA(Pro). As ProRS can inadvertently accommodate and process non-cognate amino acids such as alanine and cysteine, to avoid such errors it has two additional distinct editing activities against alanine. One activity is designated as 'pretransfer' editing and involves the tRNA(Pro)-independent hydrolysis of activated Ala-AMP. The other activity is designated 'posttransfer' editing and involves deacylation of mischarged Ala-tRNA(Pro). The misacylated Cys-tRNA(Pro) is not edited by ProRS. The polypeptide is Proline--tRNA ligase (Listeria monocytogenes serotype 4a (strain HCC23)).